The following is a 1180-amino-acid chain: Protocadherin-12 (1180 aa).

Positions 1–17 (MMLLLPFLLGLLGPGSY) are cleaved as a signal peptide. The Extracellular segment spans residues 18–716 (LFISGDCQEV…HEPGVLSTPA (699 aa)). Cadherin domains follow at residues 28-135 (ATVM…QPQF), 136-244 (PKDE…SPVF), 245-352 (AESS…APSI), 355-460 (TWAS…APVF), and 461-565 (EKSR…APEV). N-linked (GlcNAc...) asparagine glycans are attached at residues Asn265 and Asn415. Asn582, Asn659, and Asn662 each carry an N-linked (GlcNAc...) asparagine glycan. Residues 600–711 (PAGTGIPPKA…LRDSAHEPGV (112 aa)) form the Cadherin 6 domain. A helical transmembrane segment spans residues 717–737 (LALICLAVLLAIFGLLLALFV). Residues 738 to 1180 (SICRTERKDN…ESRLGCGRNL (443 aa)) lie on the Cytoplasmic side of the membrane. Disordered stretches follow at residues 857–930 (NASR…GPHQ) and 973–1026 (QFQP…PEED). Ser859 carries the phosphoserine modification. Residues 904 to 918 (PASSATLRRQRNFNG) are compositionally biased toward polar residues. Residues 1014–1026 (PDLEEGPPSPEED) are compositionally biased toward acidic residues. Position 1064 is a phosphoserine (Ser1064). Residues 1076–1093 (SSPDATTSEEPRTFQTFG) are compositionally biased toward polar residues. Disordered regions lie at residues 1076-1104 (SSPD…ELSP) and 1156-1180 (SGAS…GRNL).

N-glycosylated. In terms of processing, cleaved by ADAM10 close to the transmembrane domain to release the Protocadherin-12, secreted form in the serum. Cleavage results in reduced cellular adhesion in a cell migration assay. As to expression, expressed in endothelial cells: localizes in vasculogenic rather than angiogenic endothelium. Strongly expressed in a subset of invasive cells of the placenta, named glycogen-rich trophoblasts cells (at protein level). glycogen-rich trophoblasts cells originate from the from the ectoplacental cone where they rapidly form tight islets (at protein level). In adult mice, present at high level in mesangial cells of kidney glomeruli, while expression was not detected in other types of perivascular cells.

It is found in the cell membrane. The protein resides in the cell junction. The protein localises to the secreted. Cellular adhesion molecule that may play an important role in cell-cell interactions at interendothelial junctions. Acts as a regulator of cell migration, probably via increasing cell-cell adhesion. Promotes homotypic calcium-dependent aggregation and adhesion and clusters at intercellular junctions. Unable to bind to catenins, weakly associates with the cytoskeleton. The polypeptide is Protocadherin-12 (Mus musculus (Mouse)).